Reading from the N-terminus, the 150-residue chain is Large ribosomal subunit protein bL9 (150 aa).

This sequence belongs to the bacterial ribosomal protein bL9 family.

Functionally, binds to the 23S rRNA. The chain is Large ribosomal subunit protein bL9 from Shewanella oneidensis (strain ATCC 700550 / JCM 31522 / CIP 106686 / LMG 19005 / NCIMB 14063 / MR-1).